Reading from the N-terminus, the 435-residue chain is Serine hydroxymethyltransferase (435 aa).

(6S)-5,6,7,8-tetrahydrofolate-binding positions include L133 and 137–139 (GHL). Position 242 is an N6-(pyridoxal phosphate)lysine (K242).

It belongs to the SHMT family. As to quaternary structure, homodimer. Pyridoxal 5'-phosphate serves as cofactor.

The protein resides in the cytoplasm. The enzyme catalyses (6R)-5,10-methylene-5,6,7,8-tetrahydrofolate + glycine + H2O = (6S)-5,6,7,8-tetrahydrofolate + L-serine. The protein operates within one-carbon metabolism; tetrahydrofolate interconversion. It functions in the pathway amino-acid biosynthesis; glycine biosynthesis; glycine from L-serine: step 1/1. In terms of biological role, catalyzes the reversible interconversion of serine and glycine with tetrahydrofolate (THF) serving as the one-carbon carrier. This reaction serves as the major source of one-carbon groups required for the biosynthesis of purines, thymidylate, methionine, and other important biomolecules. Also exhibits THF-independent aldolase activity toward beta-hydroxyamino acids, producing glycine and aldehydes, via a retro-aldol mechanism. This is Serine hydroxymethyltransferase from Hyphomonas neptunium (strain ATCC 15444).